Consider the following 880-residue polypeptide: Nonsense-mediated mRNA decay factor SMG7-like (880 aa).

2 TPR repeats span residues 149 to 183 (QEQY…NPHN) and 184 to 217 (QLAV…GASN). The interval 669 to 711 (RLGLSKPNGLGPIDETGPVSAFDSLSINSSTEHPASSYSPPTP) is disordered. A compositionally biased stretch (polar residues) spans 691–701 (DSLSINSSTEH).

Its function is as follows. May play a role in growth and development. The polypeptide is Nonsense-mediated mRNA decay factor SMG7-like (Arabidopsis thaliana (Mouse-ear cress)).